A 288-amino-acid chain; its full sequence is DegV domain-containing protein SAS0714 (288 aa).

Residues Ile-3–Gly-282 form the DegV domain. Thr-62 and Ser-95 together coordinate hexadecanoate.

May bind long-chain fatty acids, such as palmitate, and may play a role in lipid transport or fatty acid metabolism. This chain is DegV domain-containing protein SAS0714, found in Staphylococcus aureus (strain MSSA476).